A 265-amino-acid chain; its full sequence is Tryptophan synthase alpha chain (265 aa).

Residues glutamate 41 and aspartate 52 each act as proton acceptor in the active site.

Belongs to the TrpA family. Tetramer of two alpha and two beta chains.

It catalyses the reaction (1S,2R)-1-C-(indol-3-yl)glycerol 3-phosphate + L-serine = D-glyceraldehyde 3-phosphate + L-tryptophan + H2O. Its pathway is amino-acid biosynthesis; L-tryptophan biosynthesis; L-tryptophan from chorismate: step 5/5. In terms of biological role, the alpha subunit is responsible for the aldol cleavage of indoleglycerol phosphate to indole and glyceraldehyde 3-phosphate. This is Tryptophan synthase alpha chain from Bacillus velezensis (strain DSM 23117 / BGSC 10A6 / LMG 26770 / FZB42) (Bacillus amyloliquefaciens subsp. plantarum).